The chain runs to 155 residues: UPF0305 protein MTH_811 (155 aa).

The protein belongs to the UPF0305 family.

The sequence is that of UPF0305 protein MTH_811 from Methanothermobacter thermautotrophicus (strain ATCC 29096 / DSM 1053 / JCM 10044 / NBRC 100330 / Delta H) (Methanobacterium thermoautotrophicum).